Consider the following 2104-residue polypeptide: Phenolphthiocerol synthesis polyketide synthase type I Pks15/1 (2104 aa).

One can recognise a Ketosynthase family 3 (KS3) domain in the interval 41–464; the sequence is TEPVAVVGIG…GTNAHVILEE (424 aa). Active-site for beta-ketoacyl synthase activity residues include C211, H346, and H386. An acyltransferase region spans residues 571–887; that stretch reads TAVVFPGQGS…GQLFSTGMSV (317 aa). The For acyltransferase activity role is filled by S662. An N-terminal hotdog fold region spans residues 935 to 1057; sequence HALLGAVVER…GMLGVEAASS (123 aa). Residues 935 to 1095 are dehydratase; the sequence is HALLGAVVER…YAYGPGFQGL (161 aa). The region spanning 935–1207 is the PKS/mFAS DH domain; the sequence is HALLGAVVER…TRAMSAAQLR (273 aa). Residue H967 is the Proton acceptor; for dehydratase activity of the active site. Residues 1069-1207 are C-terminal hotdog fold; the sequence is AESVDISDGY…TRAMSAAQLR (139 aa). The active-site Proton donor; for dehydratase activity is D1128. Positions 1400–1705 are enoylreductase; it reads GTLEDLVIEP…QARHIGKVVL (306 aa). NADP(+)-binding positions include 1530–1547 and 1719–1734; these read VLIH…VQLA and TVLI…AVLA. The beta-ketoacyl reductase (KR) stretch occupies residues 1718–1899; the sequence is ATVLITGATG…SVAWGLWEQS (182 aa). Residues 2004–2079 form the Carrier domain; sequence DALVGLVCLQ…AIAEYVGRQI (76 aa). S2039 is modified (O-(pantetheine 4'-phosphoryl)serine). The interval 2081 to 2104 is disordered; the sequence is DSQATQAEEEKLPESDGEMVSVTA.

Belongs to the thiolase-like superfamily. Beta-ketoacyl-ACP synthases family. Requires pantetheine 4'-phosphate as cofactor.

The catalysed reaction is a fatty acyl-[ACP] + malonyl-[ACP] + H(+) = a 3-oxoacyl-[ACP] + holo-[ACP] + CO2. Its pathway is lipid metabolism; fatty acid biosynthesis. In terms of biological role, catalyzes the elongation by iterative transfer of p-hydroxybenzoyl group from FadD22 (pHBA-S-FAdD22) to form p-hydroxyphenylalkanoate (pHPA) intermediates during phenolphthiocerol (PPOL) biosynthesis. PPOL is an important intermediate in the biosynthesis of phenolic glycolipid (mycosid B). The protein is Phenolphthiocerol synthesis polyketide synthase type I Pks15/1 (pks15/1) of Mycobacterium marinum (strain ATCC BAA-535 / M).